Consider the following 333-residue polypeptide: Cytochrome f (333 aa).

The signal sequence occupies residues 1–44 (MRNACTRARLTRTARAMVKTLFIAIASVTFFFTSDLALPQSAAA). Heme-binding residues include Tyr45, Cys66, Cys69, and His70. The helical transmembrane segment at 299 to 318 (VGWLIAFVALVMLAQVMLVL) threads the bilayer.

The protein belongs to the cytochrome f family. As to quaternary structure, the 4 large subunits of the cytochrome b6-f complex are cytochrome b6, subunit IV (17 kDa polypeptide, PetD), cytochrome f and the Rieske protein, while the 4 small subunits are PetG, PetL, PetM and PetN. The complex functions as a dimer. It depends on heme as a cofactor.

The protein localises to the cellular thylakoid membrane. Functionally, component of the cytochrome b6-f complex, which mediates electron transfer between photosystem II (PSII) and photosystem I (PSI), cyclic electron flow around PSI, and state transitions. The protein is Cytochrome f of Nostoc sp. (strain PCC 7120 / SAG 25.82 / UTEX 2576).